Consider the following 537-residue polypeptide: Glutamyl-tRNA(Gln) amidotransferase subunit B, chloroplastic/mitochondrial (537 aa).

The protein belongs to the GatB/GatE family. GatB subfamily. In terms of assembly, subunit of the heterotrimeric GatCAB amidotransferase (AdT) complex, composed of A, B and C subunits.

Its subcellular location is the mitochondrion. It is found in the plastid. The protein resides in the chloroplast. It catalyses the reaction L-glutamyl-tRNA(Gln) + L-glutamine + ATP + H2O = L-glutaminyl-tRNA(Gln) + L-glutamate + ADP + phosphate + H(+). Allows the formation of correctly charged Gln-tRNA(Gln) through the transamidation of misacylated Glu-tRNA(Gln) in chloroplasts and mitochondria. The reaction takes place in the presence of glutamine and ATP through an activated gamma-phospho-Glu-tRNA(Gln). This is Glutamyl-tRNA(Gln) amidotransferase subunit B, chloroplastic/mitochondrial from Ostreococcus tauri.